A 206-amino-acid polypeptide reads, in one-letter code: Guanylate kinase (206 aa).

Residues 6–184 (GILFILSGPS…AVDKVKTIIK (179 aa)) enclose the Guanylate kinase-like domain. 13 to 20 (GPSGVGKG) contacts ATP.

The protein belongs to the guanylate kinase family.

The protein localises to the cytoplasm. The catalysed reaction is GMP + ATP = GDP + ADP. Essential for recycling GMP and indirectly, cGMP. This is Guanylate kinase from Oceanobacillus iheyensis (strain DSM 14371 / CIP 107618 / JCM 11309 / KCTC 3954 / HTE831).